The following is a 209-amino-acid chain: Glutathione S-transferase 1-1 (209 aa).

The 81-residue stretch at 1-81 (MADFYYLPGS…YLVEKYGKTD (81 aa)) folds into the GST N-terminal domain. Residues serine 10, 51–53 (HTI), and 65–67 (ESR) each bind glutathione. The GST C-terminal domain maps to 87-209 (CPKKRAVINQ…GCLEFKKFFE (123 aa)).

This sequence belongs to the GST superfamily. Theta family. As to quaternary structure, homodimer.

The enzyme catalyses RX + glutathione = an S-substituted glutathione + a halide anion + H(+). The catalysed reaction is 1,1,1-trichloro-2,2-bis(4-chlorophenyl)ethane = 1,1-dichloro-2,2-bis(4-chlorophenyl)ethylene + chloride + H(+). Functionally, conjugation of reduced glutathione to a wide number of exogenous and endogenous hydrophobic electrophiles. Has DDT dehydrochlorinase activity. This Drosophila sechellia (Fruit fly) protein is Glutathione S-transferase 1-1 (GstD1).